The primary structure comprises 116 residues: Protein Rev (116 aa).

Ser-5 bears the Phosphoserine; by host CK2 mark. The tract at residues 18 to 26 is homomultimerization; it reads YIKILYQSN. The short motif at 34–50 is the Nuclear localization signal and RNA-binding (RRE) element; it reads TRKARRNRRRRWRARQR. Positions 73-84 match the Nuclear export signal and binding to XPO1 motif; that stretch reads LQLPLLEKLHIN. A disordered region spans residues 90-116; that stretch reads GQGTEKGVGSPQISVESRAVLGSGTKE. Ser-99 bears the Phosphoserine; by host mark.

This sequence belongs to the HIV-1 REV protein family. Homomultimer; when bound to the RRE. Multimeric assembly is essential for activity and may involve XPO1. Binds to human KPNB1, XPO1, TNPO1, RANBP5 and IPO7. Interacts with the viral Integrase. Interacts with human KHDRBS1. Interacts with human NAP1; this interaction decreases Rev multimerization and stimulates its activity. Interacts with human DEAD-box helicases DDX3 and DDX24; these interactions may serve for viral RNA export to the cytoplasm and packaging, respectively. Interacts with human PSIP1; this interaction may inhibit HIV-1 DNA integration by promoting dissociation of the Integrase-LEDGF/p75 complex. In terms of processing, asymmetrically arginine dimethylated at one site by host PRMT6. Methylation impairs the RNA-binding activity and export of viral RNA from the nucleus to the cytoplasm. Post-translationally, phosphorylated by protein kinase CK2. Presence of, and maybe binding to the N-terminus of the regulatory beta subunit of CK2 is necessary for CK2-mediated Rev's phosphorylation.

It localises to the host nucleus. It is found in the host nucleolus. The protein resides in the host cytoplasm. Functionally, escorts unspliced or incompletely spliced viral pre-mRNAs (late transcripts) out of the nucleus of infected cells. These pre-mRNAs carry a recognition sequence called Rev responsive element (RRE) located in the env gene, that is not present in fully spliced viral mRNAs (early transcripts). This function is essential since most viral proteins are translated from unspliced or partially spliced pre-mRNAs which cannot exit the nucleus by the pathway used by fully processed cellular mRNAs. Rev itself is translated from a fully spliced mRNA that readily exits the nucleus. Rev's nuclear localization signal (NLS) binds directly to KPNB1/Importin beta-1 without previous binding to KPNA1/Importin alpha-1. KPNB1 binds to the GDP bound form of RAN (Ran-GDP) and targets Rev to the nucleus. In the nucleus, the conversion from Ran-GDP to Ran-GTP dissociates Rev from KPNB1 and allows Rev's binding to the RRE in viral pre-mRNAs. Rev multimerization on the RRE via cooperative assembly exposes its nuclear export signal (NES) to the surface. Rev can then form a complex with XPO1/CRM1 and Ran-GTP, leading to nuclear export of the complex. Conversion from Ran-GTP to Ran-GDP mediates dissociation of the Rev/RRE/XPO1/RAN complex, so that Rev can return to the nucleus for a subsequent round of export. Beside KPNB1, also seems to interact with TNPO1/Transportin-1, RANBP5/IPO5 and IPO7/RANBP7 for nuclear import. The nucleoporin-like HRB/RIP is an essential cofactor that probably indirectly interacts with Rev to release HIV RNAs from the perinuclear region to the cytoplasm. In Human immunodeficiency virus type 1 group M subtype F2 (isolate MP257) (HIV-1), this protein is Protein Rev.